Consider the following 442-residue polypeptide: Cell division protein FtsA (442 aa).

This sequence belongs to the FtsA/MreB family. Self-interacts. Interacts with FtsZ.

Its subcellular location is the cell inner membrane. Its function is as follows. Cell division protein that is involved in the assembly of the Z ring. May serve as a membrane anchor for the Z ring. The sequence is that of Cell division protein FtsA from Rhizobium meliloti (strain 1021) (Ensifer meliloti).